The sequence spans 83 residues: Cytochrome b559 subunit alpha (83 aa).

Residues 22–36 (VIHAVTLPAIFLAGF) form a helical membrane-spanning segment. His-24 is a heme binding site.

It belongs to the PsbE/PsbF family. Heterodimer of an alpha subunit and a beta subunit. PSII is composed of 1 copy each of membrane proteins PsbA, PsbB, PsbC, PsbD, PsbE, PsbF, PsbH, PsbI, PsbJ, PsbK, PsbL, PsbM, PsbT, PsbX, PsbY, PsbZ, Psb30/Ycf12, peripheral proteins PsbO, CyanoQ (PsbQ), PsbU, PsbV and a large number of cofactors. It forms dimeric complexes. Heme b serves as cofactor.

It is found in the cellular thylakoid membrane. Its function is as follows. This b-type cytochrome is tightly associated with the reaction center of photosystem II (PSII). PSII is a light-driven water:plastoquinone oxidoreductase that uses light energy to abstract electrons from H(2)O, generating O(2) and a proton gradient subsequently used for ATP formation. It consists of a core antenna complex that captures photons, and an electron transfer chain that converts photonic excitation into a charge separation. The protein is Cytochrome b559 subunit alpha of Synechococcus sp. (strain RCC307).